We begin with the raw amino-acid sequence, 365 residues long: Undecaprenyl-phosphate alpha-N-acetylglucosaminyl 1-phosphate transferase (365 aa).

A run of 10 helical transmembrane segments spans residues 3 to 23 (LLTMSTELIYIFLFSMAFLFV), 45 to 65 (GLIPLVGGISVFAGVCFAFLI), 99 to 119 (IRAFVQALVGIAMMAVAGLYL), 132 to 152 (VLGPFGYVVTLFAVWAAINAF), 157 to 177 (GIDGLLGGLSCVSFGAMGILL), 187 to 207 (LWCFAMIATIIPYILLNLGLL), 213 to 233 (VFMGDAGSTLIGFTAIWILLQ), 242 to 262 (INPVTALWIIAIPLMDMIAIM), 293 to 313 (QAFVLITLAAALLAMIGVIGE), and 315 to 335 (LTFIPEWVMLALFLLAFLLYG).

The protein belongs to the glycosyltransferase 4 family. WecA subfamily. The cofactor is Mg(2+). It depends on Mn(2+) as a cofactor.

The protein localises to the cell inner membrane. The catalysed reaction is di-trans,octa-cis-undecaprenyl phosphate + UDP-N-acetyl-alpha-D-glucosamine = N-acetyl-alpha-D-glucosaminyl-di-trans,octa-cis-undecaprenyl diphosphate + UMP. Its pathway is bacterial outer membrane biogenesis; LPS O-antigen biosynthesis. It functions in the pathway bacterial outer membrane biogenesis; enterobacterial common antigen biosynthesis. Functionally, catalyzes the transfer of the GlcNAc-1-phosphate moiety from UDP-GlcNAc onto the carrier lipid undecaprenyl phosphate (C55-P), yielding GlcNAc-pyrophosphoryl-undecaprenyl (GlcNAc-PP-C55). The protein is Undecaprenyl-phosphate alpha-N-acetylglucosaminyl 1-phosphate transferase of Yersinia pestis.